We begin with the raw amino-acid sequence, 215 residues long: Pre-hexon-linking protein VIII (215 aa).

Thr62 bears the Phosphothreonine; by host mark. A propeptide spanning residues Ala110–Gly150 is cleaved from the precursor.

It belongs to the adenoviridae hexon-linking protein family. In terms of assembly, interacts with the peripentonal hexons as well as the hexons in the facets. Part of a complex composed of the core-capsid bridging protein, the endosome lysis protein VI and the hexon-linking protein VIII; these interactions bridge the virus core to the capsid. Cleaved by the viral protease during virion maturation. May cause the middle segment to be shed from the capsid.

It is found in the virion. It localises to the host nucleus. Structural component of the virion that acts as a cement protein on the capsid interior and which glue the peripentonal hexons and group-of-nine hexons together. The polypeptide is Pre-hexon-linking protein VIII (Murine adenovirus A serotype 1 (MAdV-1)).